A 370-amino-acid polypeptide reads, in one-letter code: NAD-dependent histone deacetylase HST4 (370 aa).

The tract at residues 1-27 (MKQKFVLPITPPSTAEKKPQTENRCNE) is disordered. Residues 15-27 (AEKKPQTENRCNE) are compositionally biased toward basic and acidic residues. A Deacetylase sirtuin-type domain is found at 75 to 370 (RHHMDRDAGF…GDCQHVTSLL (296 aa)). NAD(+)-binding positions include 100–119 (GAGISVAAGIPDFRSSEGIF) and 184–187 (QNID). Catalysis depends on histidine 213, which acts as the Proton acceptor. 4 residues coordinate Zn(2+): cysteine 221, cysteine 224, cysteine 251, and cysteine 254. NAD(+) contacts are provided by residues 310 to 312 (GTS), 340 to 342 (NTS), and cysteine 363.

Belongs to the sirtuin family. Class I subfamily. Zn(2+) serves as cofactor.

Its subcellular location is the nucleus. The enzyme catalyses N(6)-acetyl-L-lysyl-[protein] + NAD(+) + H2O = 2''-O-acetyl-ADP-D-ribose + nicotinamide + L-lysyl-[protein]. In terms of biological role, NAD-dependent histone deacetylase, which contributes together with HST3 to histone H3 'Lys-56' deacetylation, regulation of telomeric silencing, proper cell cycle progression, DNA damage control, DNA recombination, and genomic maintenance. The chain is NAD-dependent histone deacetylase HST4 (HST4) from Saccharomyces cerevisiae (strain ATCC 204508 / S288c) (Baker's yeast).